A 514-amino-acid chain; its full sequence is HERV-H LTR-associating protein 1 homolog (514 aa).

The signal sequence occupies residues 1–29; it reads MQSFLLHCPPIRLCMGLACILFLWNAVSG. Asn-58, Asn-97, Asn-139, Asn-161, Asn-179, Asn-200, Asn-217, Asn-232, and Asn-321 each carry an N-linked (GlcNAc...) asparagine glycan. The interval 379–420 is disordered; sequence LHPTGILTTPSRLAQPSRASGTLMPGTQTTNPTQAPAPRVPQ. Over residues 384–398 the composition is skewed to polar residues; the sequence is ILTTPSRLAQPSRAS. Residues 403 to 415 show a composition bias toward low complexity; sequence PGTQTTNPTQAPA.

The protein resides in the secreted. This chain is HERV-H LTR-associating protein 1 homolog (Hhla1), found in Mus musculus (Mouse).